Here is a 236-residue protein sequence, read N- to C-terminus: MATPHINAVEGAFAETVLFPGDPLRAKYIAETFLENVEQVTDVRNMLGFTGTYKGKRISVMGSGMGIPSCSIYATELIKDYGVKNLIRVGTCGAISTDVKVRDVIIGMGACTDSQVNRLRFKGQDFAAIANYELMNAVIESAKVKGTKIRVGNVFSADLFYTPDPQMFDVMEKMGVLGVEMEAAGLYGVAHEFGARALCVVTVSDHIRTGEKTTSDERQTTFNDMIVMTLDAAITL.

His-5 serves as a coordination point for a purine D-ribonucleoside. Phosphate-binding positions include Gly-21, Arg-25, Arg-44, and 88 to 91 (RVGT). A purine D-ribonucleoside is bound by residues 180–182 (EME) and 204–205 (SD). The active-site Proton donor is the Asp-205.

Belongs to the PNP/UDP phosphorylase family. Homohexamer; trimer of homodimers.

The enzyme catalyses a purine D-ribonucleoside + phosphate = a purine nucleobase + alpha-D-ribose 1-phosphate. The catalysed reaction is a purine 2'-deoxy-D-ribonucleoside + phosphate = a purine nucleobase + 2-deoxy-alpha-D-ribose 1-phosphate. Functionally, catalyzes the reversible phosphorolytic breakdown of the N-glycosidic bond in the beta-(deoxy)ribonucleoside molecules, with the formation of the corresponding free purine bases and pentose-1-phosphate. This is Purine nucleoside phosphorylase DeoD-type from Shewanella sp. (strain MR-4).